The primary structure comprises 273 residues: DNA repair protein RecO (273 aa).

The protein belongs to the RecO family.

Involved in DNA repair and RecF pathway recombination. This Saccharopolyspora erythraea (strain ATCC 11635 / DSM 40517 / JCM 4748 / NBRC 13426 / NCIMB 8594 / NRRL 2338) protein is DNA repair protein RecO.